Here is a 281-residue protein sequence, read N- to C-terminus: L-cysteine S-thiosulfotransferase subunit SoxA (281 aa).

The signal sequence occupies residues 1–25 (MTKHGFLLATLVLAGATLPIGPVTA). Cys99 and Cys130 are joined by a disulfide. In terms of domain architecture, Cytochrome c spans 175 to 281 (AAYEQGKRFY…LELNGPGARK (107 aa)). Heme contacts are provided by Cys195 and His199. Residue Arg238 coordinates substrate. Cys242 is a heme binding site. Cys242 (cysteine persulfide intermediate) is an active-site residue.

It belongs to the SoxA family. Heterodimer of SoxA and SoxX. Requires heme as cofactor. In terms of processing, cysteine persulfide at Cys-242.

Its subcellular location is the periplasm. It catalyses the reaction L-cysteinyl-[SoxY protein] + thiosulfate + 2 Fe(III)-[cytochrome c] = S-sulfosulfanyl-L-cysteinyl-[SoxY protein] + 2 Fe(II)-[cytochrome c] + 2 H(+). The enzyme catalyses S-sulfanyl-L-cysteinyl-[SoxY protein] + thiosulfate + 2 Fe(III)-[cytochrome c] = S-(2-sulfodisulfanyl)-L-cysteinyl-[SoxY protein] + 2 Fe(II)-[cytochrome c] + 2 H(+). Its function is as follows. C-type monoheme cytochrome, which is part of the SoxAX cytochrome complex involved in sulfur oxidation. The SoxAX complex catalyzes the formation of a heterodisulfide bond between the conserved cysteine residue on a sulfur carrier SoxYZ complex subunit SoxY and thiosulfate or other inorganic sulfur substrates. This leads to the intermediary formation of conspicuous sulfur globules inside of the cells. The chain is L-cysteine S-thiosulfotransferase subunit SoxA from Allochromatium vinosum (Chromatium vinosum).